The chain runs to 193 residues: Peptide deformylase 2 (193 aa).

2 residues coordinate Fe cation: Cys100 and His142. The active site involves Glu143. Residue His146 coordinates Fe cation.

The protein belongs to the polypeptide deformylase family. Fe(2+) is required as a cofactor.

It carries out the reaction N-terminal N-formyl-L-methionyl-[peptide] + H2O = N-terminal L-methionyl-[peptide] + formate. Functionally, removes the formyl group from the N-terminal Met of newly synthesized proteins. Requires at least a dipeptide for an efficient rate of reaction. N-terminal L-methionine is a prerequisite for activity but the enzyme has broad specificity at other positions. This chain is Peptide deformylase 2, found in Corynebacterium efficiens (strain DSM 44549 / YS-314 / AJ 12310 / JCM 11189 / NBRC 100395).